A 511-amino-acid polypeptide reads, in one-letter code: ATP synthase subunit alpha (511 aa).

169–176 is an ATP binding site; that stretch reads GDRQTGKT.

This sequence belongs to the ATPase alpha/beta chains family. As to quaternary structure, F-type ATPases have 2 components, CF(1) - the catalytic core - and CF(0) - the membrane proton channel. CF(1) has five subunits: alpha(3), beta(3), gamma(1), delta(1), epsilon(1). CF(0) has three main subunits: a(1), b(2) and c(9-12). The alpha and beta chains form an alternating ring which encloses part of the gamma chain. CF(1) is attached to CF(0) by a central stalk formed by the gamma and epsilon chains, while a peripheral stalk is formed by the delta and b chains.

The protein resides in the cell inner membrane. It catalyses the reaction ATP + H2O + 4 H(+)(in) = ADP + phosphate + 5 H(+)(out). In terms of biological role, produces ATP from ADP in the presence of a proton gradient across the membrane. The alpha chain is a regulatory subunit. The polypeptide is ATP synthase subunit alpha (Bartonella bacilliformis (strain ATCC 35685 / KC583 / Herrer 020/F12,63)).